We begin with the raw amino-acid sequence, 275 residues long: Dermonecrotic toxin SpeSicTox-betaIIA2v (275 aa).

H5 is an active-site residue. Mg(2+) contacts are provided by E25 and D27. The active-site Nucleophile is the H41. Cystine bridges form between C45–C51 and C47–C190. D85 lines the Mg(2+) pocket.

This sequence belongs to the arthropod phospholipase D family. Class II subfamily. Mg(2+) serves as cofactor. As to expression, expressed by the venom gland.

The protein resides in the secreted. It catalyses the reaction an N-(acyl)-sphingosylphosphocholine = an N-(acyl)-sphingosyl-1,3-cyclic phosphate + choline. The enzyme catalyses an N-(acyl)-sphingosylphosphoethanolamine = an N-(acyl)-sphingosyl-1,3-cyclic phosphate + ethanolamine. The catalysed reaction is a 1-acyl-sn-glycero-3-phosphocholine = a 1-acyl-sn-glycero-2,3-cyclic phosphate + choline. It carries out the reaction a 1-acyl-sn-glycero-3-phosphoethanolamine = a 1-acyl-sn-glycero-2,3-cyclic phosphate + ethanolamine. Dermonecrotic toxins cleave the phosphodiester linkage between the phosphate and headgroup of certain phospholipids (sphingolipid and lysolipid substrates), forming an alcohol (often choline) and a cyclic phosphate. This toxin acts on sphingomyelin (SM). It may also act on ceramide phosphoethanolamine (CPE), lysophosphatidylcholine (LPC) and lysophosphatidylethanolamine (LPE), but not on lysophosphatidylserine (LPS), and lysophosphatidylglycerol (LPG). It acts by transphosphatidylation, releasing exclusively cyclic phosphate products as second products. Induces dermonecrosis, hemolysis, increased vascular permeability, edema, inflammatory response, and platelet aggregation. The sequence is that of Dermonecrotic toxin SpeSicTox-betaIIA2v from Sicarius peruensis (Six-eyed sand spider).